Reading from the N-terminus, the 451-residue chain is MEMILEEKDASDWIYRGEGGANLVLAYAGSSPLFVGKVIRIQKARRNDKAIKNANGVVSVLTSDEQHLWRENNELISSPNKEVLEQRYVKNVIIPLLGPKHVDAGVRVSVSKEFLECVDKKVTKQRPLWRVNAANVDTSHDSALILNDHSLFSQGISSGGDCISVEIKPKCGFLPTSRFIGKENMLKTSVSRFKMHQLLKLEYNEISEESEYDPLDLFSGSKESVLEAIKALYSTPQNNFRVFLNGSLILGGSGESTGRTSPEIGYAFEDALKGFIQSEDGHRTECFLQLVSDAVYGSGVLDRLLEIQKLDKLDIEGAIHSYYDLINQPCPICKEGKPLEAELSLHALPLDESLKIVKEYLIAATAKDCSIMISFQSRNAWDSEPSGDYVSLKPTNQTFDYKVHFIDLSLKPLKRMESYYKLDKKIISFYNRKQKAENTAEQIGNSKPSHS.

Met-1 carries the N-acetylmethionine modification. Residues Gly-19–Asn-22 and Arg-40 contribute to the ATP site. Substrate contacts are provided by Arg-45 and Arg-130. ATP is bound by residues Asn-147–His-149 and Glu-166–Lys-168. Positions Glu-166 to Lys-170 match the EXKPK motif motif. Substrate contacts are provided by Lys-170, Lys-200, and Asn-238. Arg-241 contacts ATP. Zn(2+) contacts are provided by His-320, Cys-330, Cys-333, and His-346. Asp-368 serves as a coordination point for substrate. Residue Asp-407 participates in ATP binding. 3 residues coordinate substrate: Lys-411, Arg-415, and Tyr-419.

The protein belongs to the IPK1 type 2 family. It depends on Zn(2+) as a cofactor. Strongly expressed in leaves and cauline leaves. Weakly expressed in siliques and flowers. In flower, it is expressed in the major organs of developing flower buds. Strongly expressed in sepals, petals, in the male and female organs of immature and mature flower buds. Strongly expressed in the gynoecium and carpels which are fused to form the gynoecium. Also expressed in the transmitting tissue and ovules.

The enzyme catalyses 1D-myo-inositol 1,3,4,5,6-pentakisphosphate + ATP = 1D-myo-inositol hexakisphosphate + ADP + H(+). Functionally, phosphorylates Ins(1,3,4,5,6)P5 at position 2 to form Ins(1,2,3,4,5,6)P6 (InsP6 or phytate). Phytate is a regulator of intracellular signaling, a highly abundant animal antinutrient, and a phosphate store in plant seeds. Also phosphorylates Ins(1,3,4,6)P4 and Ins(1,4,5,6)P4 to produce Ins(1,2,3,4,6)P5 and Ins(1,2,4,5,6)P5. This chain is Inositol-pentakisphosphate 2-kinase (IPK1), found in Arabidopsis thaliana (Mouse-ear cress).